We begin with the raw amino-acid sequence, 434 residues long: D-amino acid dehydrogenase (434 aa).

3–17 provides a ligand contact to FAD; the sequence is VIILGGGVIGVTSAW.

This sequence belongs to the DadA oxidoreductase family. It depends on FAD as a cofactor.

The catalysed reaction is a D-alpha-amino acid + A + H2O = a 2-oxocarboxylate + AH2 + NH4(+). Its pathway is amino-acid degradation; D-alanine degradation; NH(3) and pyruvate from D-alanine: step 1/1. Functionally, oxidative deamination of D-amino acids. In Proteus mirabilis (strain HI4320), this protein is D-amino acid dehydrogenase.